The following is a 734-amino-acid chain: Photosystem I P700 chlorophyll a apoprotein A2 (734 aa).

8 helical membrane-spanning segments follow: residues 46–69, 135–158, 175–199, 273–291, 330–353, 369–395, 417–439, and 517–535; these read IFAS…FHVA, LYTG…LHLQ, LNHH…HVAI, MAHH…GHMY, LHFQ…QHMY, AALY…IFFI, AIIS…LYVH, and FLVH…LILV. Positions 559 and 568 each coordinate [4Fe-4S] cluster. 2 consecutive transmembrane segments (helical) span residues 575–596 and 643–665; these read AFYL…YWHW and LSVW…MFLI. The chlorophyll a site is built by His654, Met662, and Tyr670. Phylloquinone is bound at residue Trp671. A helical membrane pass occupies residues 707-727; the sequence is LVGLAHFSVGYIFTYAAFLIA.

It belongs to the PsaA/PsaB family. As to quaternary structure, the PsaA/B heterodimer binds the P700 chlorophyll special pair and subsequent electron acceptors. PSI consists of a core antenna complex that captures photons, and an electron transfer chain that converts photonic excitation into a charge separation. The eukaryotic PSI reaction center is composed of at least 11 subunits. P700 is a chlorophyll a/chlorophyll a' dimer, A0 is one or more chlorophyll a, A1 is one or both phylloquinones and FX is a shared 4Fe-4S iron-sulfur center. serves as cofactor.

It is found in the plastid. Its subcellular location is the chloroplast thylakoid membrane. The catalysed reaction is reduced [plastocyanin] + hnu + oxidized [2Fe-2S]-[ferredoxin] = oxidized [plastocyanin] + reduced [2Fe-2S]-[ferredoxin]. PsaA and PsaB bind P700, the primary electron donor of photosystem I (PSI), as well as the electron acceptors A0, A1 and FX. PSI is a plastocyanin-ferredoxin oxidoreductase, converting photonic excitation into a charge separation, which transfers an electron from the donor P700 chlorophyll pair to the spectroscopically characterized acceptors A0, A1, FX, FA and FB in turn. Oxidized P700 is reduced on the lumenal side of the thylakoid membrane by plastocyanin. This is Photosystem I P700 chlorophyll a apoprotein A2 from Daucus carota (Wild carrot).